Reading from the N-terminus, the 101-residue chain is Small ribosomal subunit protein uS14 (101 aa).

This sequence belongs to the universal ribosomal protein uS14 family. As to quaternary structure, part of the 30S ribosomal subunit. Contacts proteins S3 and S10.

Binds 16S rRNA, required for the assembly of 30S particles and may also be responsible for determining the conformation of the 16S rRNA at the A site. This Methylobacterium sp. (strain 4-46) protein is Small ribosomal subunit protein uS14.